The following is a 201-amino-acid chain: Alanine--tRNA ligase (201 aa).

Belongs to the class-II aminoacyl-tRNA synthetase family. Zn(2+) is required as a cofactor.

It localises to the cytoplasm. It catalyses the reaction tRNA(Ala) + L-alanine + ATP = L-alanyl-tRNA(Ala) + AMP + diphosphate. Catalyzes the attachment of alanine to tRNA(Ala) in a two-step reaction: alanine is first activated by ATP to form Ala-AMP and then transferred to the acceptor end of tRNA(Ala). Also edits incorrectly charged Ser-tRNA(Ala) and Gly-tRNA(Ala) via its editing domain. This chain is Alanine--tRNA ligase (alaS), found in Rhizobium leguminosarum bv. viciae.